A 476-amino-acid polypeptide reads, in one-letter code: tRNA (cytosine(72)-C(5))-methyltransferase NSUN6 (476 aa).

In terms of domain architecture, PUA spans 111-203; the sequence is QGEVIVGAQC…IGIRMTEPIY (93 aa). S-adenosyl-L-methionine contacts are provided by residues 242–248, Asp-266, Asp-293, and Asp-323; that span reads CAAPGGK. The Nucleophile role is filled by Cys-373. Lys-419 carries the post-translational modification N6-acetyllysine.

It belongs to the class I-like SAM-binding methyltransferase superfamily. RsmB/NOP family.

It localises to the cytoplasm. The catalysed reaction is cytidine(72) in tRNA(Thr) + S-adenosyl-L-methionine = 5-methylcytidine(72) in tRNA(Thr) + S-adenosyl-L-homocysteine + H(+). It catalyses the reaction cytidine(72) in tRNA(Cys) + S-adenosyl-L-methionine = 5-methylcytidine(72) in tRNA(Cys) + S-adenosyl-L-homocysteine + H(+). S-adenosyl-L-methionine-dependent methyltransferase that specifically methylates the C5 position of cytosine 72 in tRNA(Thr)(TGT) and tRNA(Cys)(GCA). In vitro also methylates tRNA(Thr)(AGT). Methylation requires, in the acceptor stem region, the presence of the 3'-CCA terminus, the target site C72, the discriminator base U73, and the second and third base pairs (2:71 and 3:70) in the tRNA substrates. The protein is tRNA (cytosine(72)-C(5))-methyltransferase NSUN6 of Mus musculus (Mouse).